We begin with the raw amino-acid sequence, 237 residues long: MFDGEAIRWFEFFVPTNSTLWMAIGVLMIALLMVVGTLRRAIVPGRIQSLAELTYGFIHKMVEDVAGKDGLVYFPYIFTLFLFILFSNFLGLIPMAFTPTSHIAVTGVMAMGVFIGVTALGFMKHGSHFLNLFWVSAAPLPLRPILAVIEVISYFVRPVSHSIRLAGNMMAGHAVMEVFAAFAPLILFSFVGVIVTPLSVLAIVAMYALEILVAFVQAYVFTILTCVYLKDALHPGH.

The next 6 membrane-spanning stretches (helical) occupy residues 18–38 (STLWMAIGVLMIALLMVVGTL), 77–97 (IFTLFLFILFSNFLGLIPMAF), 103–123 (IAVTGVMAMGVFIGVTALGFM), 132–152 (LFWVSAAPLPLRPILAVIEVI), 185–205 (LILFSFVGVIVTPLSVLAIVA), and 209–229 (LEILVAFVQAYVFTILTCVYL).

Belongs to the ATPase A chain family. F-type ATPases have 2 components, CF(1) - the catalytic core - and CF(0) - the membrane proton channel. CF(1) has five subunits: alpha(3), beta(3), gamma(1), delta(1), epsilon(1). CF(0) has three main subunits: a(1), b(2) and c(9-12). The alpha and beta chains form an alternating ring which encloses part of the gamma chain. CF(1) is attached to CF(0) by a central stalk formed by the gamma and epsilon chains, while a peripheral stalk is formed by the delta and b chains.

It is found in the cellular chromatophore membrane. In terms of biological role, key component of the proton channel; it plays a direct role in the translocation of protons across the membrane. This chain is ATP synthase subunit a, found in Rhodobacter capsulatus (Rhodopseudomonas capsulata).